We begin with the raw amino-acid sequence, 127 residues long: Phosphoribosyl-AMP cyclohydrolase (127 aa).

Aspartate 83 lines the Mg(2+) pocket. A Zn(2+)-binding site is contributed by cysteine 84. 2 residues coordinate Mg(2+): aspartate 85 and aspartate 87. Cysteine 100 and cysteine 107 together coordinate Zn(2+).

The protein belongs to the PRA-CH family. Homodimer. Requires Mg(2+) as cofactor. The cofactor is Zn(2+).

It is found in the cytoplasm. The enzyme catalyses 1-(5-phospho-beta-D-ribosyl)-5'-AMP + H2O = 1-(5-phospho-beta-D-ribosyl)-5-[(5-phospho-beta-D-ribosylamino)methylideneamino]imidazole-4-carboxamide. It functions in the pathway amino-acid biosynthesis; L-histidine biosynthesis; L-histidine from 5-phospho-alpha-D-ribose 1-diphosphate: step 3/9. Its function is as follows. Catalyzes the hydrolysis of the adenine ring of phosphoribosyl-AMP. The polypeptide is Phosphoribosyl-AMP cyclohydrolase (Methanocaldococcus jannaschii (strain ATCC 43067 / DSM 2661 / JAL-1 / JCM 10045 / NBRC 100440) (Methanococcus jannaschii)).